We begin with the raw amino-acid sequence, 691 residues long: MSGASNTSQSGSKKKLSFIIRDEQEPLHRSAVSALQYDALHSRLFTGGSDTIIRTWSVPQHKDAFSARGGVRSAGKNSPVQYQSSLERHTDWVTDMVLCGNGKLLVSSSNDTTVKVWSIERDNKHGYLDSLNLHTDYVSCLAYAPLAEKVVSASFDRNIFVYDVNSNFNNFRVLVNNLLGCKNSIYSLATTPNLSHCLFFSPHQQIRMFDPRTNDKPMKMRGHSDNVRALLLNDDGTRALSAGSDGTIRLWDIGMQKNIATGIAHEEGVWTIQVDASFKFVYSGGRDRYVLKSPVNDLSKFQVLFKEEAPVKKLLLSEKENPSSIWVGTWKSDIKRWSLNSANQNSNGGDEEGVSSFSTYYTTCKPRSSSPPPGITAPKHIQRLTDARELQNTPELMISGAPAINKYKILNDKRHVLTSDTEDNVALYDVLAGKKVKEYGKRALENVFEEKSKTVYVPSWFIVDSKSGMLQITLDELDVFSSWLTTKDAGFDDSDKETKVNYGGMMLRSLFERWPPCKLATAEAGESDEVQKATSHYYTLPEHTPFIVCEGNGRPLFRLLVGDAGNEFESGELAQCVPPWVTDMIERNVLPKFNKMPFYLLPHPSTNSKQPKKDRLSATEMLLVKKVMEHVYEKVLGNVDANTVPLNQIHTKIEMYCNDQKLEPETDLRTVKHFYWKQSGELLLYYRPVKN.

8 WD repeats span residues 27 to 82, 88 to 130, 133 to 168, 180 to 219, 222 to 261, 264 to 303, 306 to 347, and 399 to 438; these read LHRS…PVQY, RHTD…YLDS, LHTDYVSCLAYAPLAEKVVSASFDRNIFVYDVNSNF, GCKNSIYSLATTPNLSHCLFFSPHQQIRMFDPRTNDKPMK, GHSDNVRALLLNDDGTRALSAGSDGTIRLWDIGMQKNIAT, AHEEGVWTIQVDASFKFVYSGGRDRYVLKSPVNDLSKFQV, KEEA…QNSN, and SGAPAINKYKILNDKRHVLTSDTEDNVALYDVLAGKKVKE.

Belongs to the WD repeat WDR48 family. As to quaternary structure, interacts with usp-46; the interaction increases the catalytic activity of usp-46 in the presence of wdr-20.

Its function is as follows. Together with wdr-20, binds to and stimulates the activity of the deubiquitinating enzyme usp-46, leading to deubiquitination and stabilization of the glr-1 glutamate receptor. This Caenorhabditis briggsae protein is WD repeat-containing protein 48 homolog (wdr-48).